The primary structure comprises 343 residues: Tetraacyldisaccharide 4'-kinase (343 aa).

Position 55-62 (Thr55–Thr62) interacts with ATP.

The protein belongs to the LpxK family.

The catalysed reaction is a lipid A disaccharide + ATP = a lipid IVA + ADP + H(+). The protein operates within glycolipid biosynthesis; lipid IV(A) biosynthesis; lipid IV(A) from (3R)-3-hydroxytetradecanoyl-[acyl-carrier-protein] and UDP-N-acetyl-alpha-D-glucosamine: step 6/6. In terms of biological role, transfers the gamma-phosphate of ATP to the 4'-position of a tetraacyldisaccharide 1-phosphate intermediate (termed DS-1-P) to form tetraacyldisaccharide 1,4'-bis-phosphate (lipid IVA). The chain is Tetraacyldisaccharide 4'-kinase from Chelativorans sp. (strain BNC1).